The following is a 223-amino-acid chain: FAD-dependent monooxygenase imqC (223 aa).

FAD is bound by residues 139–141 (RFY), Tyr-189, and Asp-210.

The protein belongs to the PheA/TfdB FAD monooxygenase family.

It functions in the pathway secondary metabolite biosynthesis. Functionally, FAD-dependent monooxygenase; part of the gene cluster that mediates the biosynthesis of imizoquins A to D, tripeptide-derived alkaloids that serve a protective role against oxidative stress that are essential for normal germination. ImqB is a canonical three-module NRPS that assembles the tripeptide backbone of the imizoquins via condensation of Trp, Tyr, and Leu-derived precursors. N-methylation by imqF and phenol oxidation by imqC, followed by cyclization via the FAD-dependent oxidase imqH carry out the three-step transformation of L-tyrosine into tetrahydroisoquinoline. Importantly, this sequence requires the presence of a free amine in the tyrosine moiety, indicating that isoquinoline formation occurs prior to peptide bond formation. The imidazolidin-4-one ring of imizoquins could form following additional oxidation of the methyl-derived bridgehead carbon by imqH. Lastly, O-methylation by imqG and leucine hydroxylation by imqE complete biosynthesis of the imizoquins. This Aspergillus flavus (strain ATCC 200026 / FGSC A1120 / IAM 13836 / NRRL 3357 / JCM 12722 / SRRC 167) protein is FAD-dependent monooxygenase imqC.